The sequence spans 369 residues: Velvet complex subunit B (369 aa).

Disordered regions lie at residues 1-54 (MYAV…STVH), 138-174 (SIST…VGQP), and 346-369 (KDGV…DNEY). Residues 13-27 (HPPPLSMDRIPPPST) are compositionally biased toward pro residues. A Velvet domain is found at 53 to 345 (VHDGRIWSLQ…ANQGIKIPIR (293 aa)).

Belongs to the velvet family. VelB subfamily. Component of the heterotrimeric velvet complex composed of laeA, veA and velB; VeA acting as a bridging protein between laeA and velB. Interacts directly with veA. Forms a heterodimeric complex with vosA; the formation of the velB-vosA complex is light-dependent.

It localises to the nucleus. The protein resides in the cytoplasm. Functionally, component of the velvet transcription factor complex that controls sexual/asexual developmental ratio in response to light, promoting sexual development in the darkness while stimulating asexual sporulation under illumination. The velvet complex acts as a global regulator for secondary metabolite gene expression. Component of the velB-VosA heterodimeric complex that plays a dual role in activating genes associated with spore maturation and repressing certain development-associated genes. The velB-VosA complex binds DNA through the DNA-binding domain of vosA that recognizes an 11-nucleotide consensus sequence 5'-CTGGCCGCGGC-3' consisting of two motifs in the promoters of key developmental regulatory genes. The vosA-velB complex binds to the beta-glucan synthase fksA gene promoter in asexual spores for repression. This is Velvet complex subunit B from Emericella nidulans (strain FGSC A4 / ATCC 38163 / CBS 112.46 / NRRL 194 / M139) (Aspergillus nidulans).